Consider the following 669-residue polypeptide: Protein ENTREP3 (669 aa).

3 consecutive transmembrane segments (helical) span residues 34–54 (LLTL…FSMV), 67–87 (SCPS…IVSW), and 91–111 (FTLV…LSMA). N-linked (GlcNAc...) asparagine glycosylation occurs at Asn-160. A helical transmembrane segment spans residues 174 to 194 (LFSVCGLTICAAIICTLSAIV). Phosphoserine is present on residues Ser-359 and Ser-390. 3 disordered regions span residues 387 to 420 (FEDS…PTAA), 445 to 502 (PRGG…TTSS), and 550 to 571 (RSAE…SGPT). Residues 399 to 408 (AARSYSCSAP) show a composition bias toward low complexity. Ser-494 is modified (phosphoserine). Residue Ser-575 is modified to Phosphoserine. Positions 597 to 624 (RRSPDPTGTGAHGYKQVRRSPWGRPGRE) are disordered.

Belongs to the ENTREP family. As to quaternary structure, may interact with WWOX.

Its subcellular location is the membrane. This chain is Protein ENTREP3, found in Mus musculus (Mouse).